The following is a 1522-amino-acid chain: Myosin-15 (1522 aa).

In terms of domain architecture, Myosin N-terminal SH3-like spans 12–61 (RKGDKVWVEDKDLAWIAADVLDSFDNKLHVETSTGKKVFVSPEKLFRRDP). One can recognise a Myosin motor domain in the interval 67-737 (NGVDDMTKLT…QIGILDSRRA (671 aa)). ATP-binding positions include 161 to 168 (GESGAGKT) and 214 to 222 (NDNSSRFGK). Actin-binding stretches follow at residues 499-533 (LIEK…FQNF), 535-558 (FHPR…AGKV), 593-618 (FPSA…KQQL), and 618-640 (LQAL…KPNS). 5 IQ domains span residues 763–792 (ARAS…AAAA), 788–817 (NAAA…AAIV), 811–840 (LVSA…HRAA), 836–865 (EHRA…SIIA), and 859–888 (RQSS…VANE). Residues 889–1059 (AGALRLAKTK…NQVLMQKTLI (171 aa)) adopt a coiled-coil conformation. The region spanning 1164 to 1456 (NIIIEGINEA…VSQMRVLVDK (293 aa)) is the Dilute domain.

This sequence belongs to the TRAFAC class myosin-kinesin ATPase superfamily. Myosin family. Plant myosin class XI subfamily. In terms of assembly, homodimer. Interacts with MYOB1 and MYOB7. Interacts with WIT1 and WIT2. Core component of the LINC complex which is composed of inner nuclear membrane SUN domain-containing proteins coupled to outer nuclear membrane WIP and WIT proteins. The LINC complex also involves nucleoskeletal proteins CRWN/LINC and possibly KAKU4 and the cytoskeletal myosin KAKU1.

The protein resides in the cytoplasm. It localises to the nucleus membrane. Its function is as follows. Myosin heavy chain that is required for the cell cycle-regulated transport of various organelles and proteins for their segregation. Functions by binding with its tail domain to receptor proteins on organelles and exerting force with its N-terminal motor domain against actin filaments, thereby transporting its cargo along polarized actin cables. Involved in trafficking of Golgi stacks and mitochondria. Plays a role in nuclear shape determination. Drives nuclear movement along actin filaments. As component of the SUN-WIP-WIT2-KAKU1 complex, mediates the transfer of cytoplasmic forces to the nuclear envelope (NE), leading to nuclear shape changes. In Arabidopsis thaliana (Mouse-ear cress), this protein is Myosin-15 (XI-I).